A 126-amino-acid polypeptide reads, in one-letter code: Sperm-specific H1/protamine-like protein type 2 (126 aa).

Positions 5-84 (KKPTTLSMIV…GATGSFRVGK (80 aa)) constitute an H15 domain. The segment at 74–126 (SGATGSFRVGKAPASPKKAKKAKSPKKKSSKKSKNKSNNAKAKKSPKKKADSN) is disordered. Basic residues predominate over residues 90–120 (KKAKKAKSPKKKSSKKSKNKSNNAKAKKSPK).

Post-translationally, OE2 and OE3 are produced by post-translational cleavage of a common precursor. As to expression, sperm.

The protein resides in the nucleus. The protein localises to the chromosome. Its function is as follows. Linker histones are implicated in chromatin remodeling and/or transcriptional regulation during spermiogenesis, the process of spermatid maturation into spermatozoa. Protamines substitute for histones in the chromatin of sperm during the haploid phase of spermatogenesis. They compact sperm DNA into a highly condensed, stable and inactive complex. In Ostrea edulis (Native oyster), this protein is Sperm-specific H1/protamine-like protein type 2.